The primary structure comprises 1056 residues: Kinesin-like protein KIN-5A (1056 aa).

Positions 1-44 (MDRRIGLTSPSPKSTEKSGRDLRSGGDANGGANTNSNSIPRGDK) are disordered. The span at 14 to 24 (STEKSGRDLRS) shows a compositional bias: basic and acidic residues. The 347-residue stretch at 49 to 395 (NVQVILRCRP…LDYAHRAKNI (347 aa)) folds into the Kinesin motor domain. 135–142 (GQTGTGKT) contacts ATP. The stretch at 443 to 525 (QEEAEKKAMT…STIKEKEYVI (83 aa)) forms a coiled coil.

Belongs to the TRAFAC class myosin-kinesin ATPase superfamily. Kinesin family. KIN-5/BimC subfamily.

It localises to the cytoplasm. The protein localises to the cytoskeleton. It is found in the spindle. Responsible for microtubule translocation. May be important for the organization of phragmoplast-specific arrays of microtubules. Plays an essential role in stabilizing the mitotic spindle. Required during mitotic cytokinesis. In Oryza sativa subsp. japonica (Rice), this protein is Kinesin-like protein KIN-5A.